The following is a 121-amino-acid chain: uncharacterized protein (121 aa).

A disordered region spans residues 100–121 (KSFSNTKDGKKNDDDNNSSSKS).

This is an uncharacterized protein from Mycoplasma pneumoniae (strain ATCC 29342 / M129 / Subtype 1) (Mycoplasmoides pneumoniae).